The following is a 468-amino-acid chain: Ribulose bisphosphate carboxylase large chain (468 aa).

The residue at position 5 (Lys5) is an N6,N6,N6-trimethyllysine. Substrate contacts are provided by Asn114 and Thr164. The Proton acceptor role is filled by Lys166. Lys168 contacts substrate. Mg(2+)-binding residues include Lys192, Asp194, and Glu195. Position 192 is an N6-carboxylysine (Lys192). His285 functions as the Proton acceptor in the catalytic mechanism. Substrate-binding residues include Arg286, His318, and Ser370.

This sequence belongs to the RuBisCO large chain family. Type I subfamily. As to quaternary structure, heterohexadecamer of 8 large chains and 8 small chains; disulfide-linked. The disulfide link is formed within the large subunit homodimers. It depends on Mg(2+) as a cofactor. Post-translationally, the disulfide bond which can form in the large chain dimeric partners within the hexadecamer appears to be associated with oxidative stress and protein turnover.

Its subcellular location is the plastid. It is found in the chloroplast. It catalyses the reaction 2 (2R)-3-phosphoglycerate + 2 H(+) = D-ribulose 1,5-bisphosphate + CO2 + H2O. It carries out the reaction D-ribulose 1,5-bisphosphate + O2 = 2-phosphoglycolate + (2R)-3-phosphoglycerate + 2 H(+). In terms of biological role, ruBisCO catalyzes two reactions: the carboxylation of D-ribulose 1,5-bisphosphate, the primary event in carbon dioxide fixation, as well as the oxidative fragmentation of the pentose substrate in the photorespiration process. Both reactions occur simultaneously and in competition at the same active site. The polypeptide is Ribulose bisphosphate carboxylase large chain (Datura stramonium (Jimsonweed)).